Consider the following 293-residue polypeptide: Nucleotide-binding protein LBA0691 (293 aa).

13 to 20 (GMSGAGKT) lines the ATP pocket. A GTP-binding site is contributed by 63–66 (DLRV).

Belongs to the RapZ-like family.

Displays ATPase and GTPase activities. The polypeptide is Nucleotide-binding protein LBA0691 (Lactobacillus acidophilus (strain ATCC 700396 / NCK56 / N2 / NCFM)).